A 21-amino-acid chain; its full sequence is Glucan endo-1,3-beta-glucosidase 2 (21 aa).

Positions 1 to 21 are disordered; the sequence is APGDLLWSDEFDGAAGSAPNP.

It catalyses the reaction Hydrolysis of (1-&gt;3)-beta-D-glucosidic linkages in (1-&gt;3)-beta-D-glucans.. This Papiliotrema laurentii (Cryptococcus laurentii) protein is Glucan endo-1,3-beta-glucosidase 2.